The primary structure comprises 466 residues: ATP synthase subunit beta (466 aa).

152-159 contacts ATP; sequence GGAGVGKT.

Belongs to the ATPase alpha/beta chains family. As to quaternary structure, F-type ATPases have 2 components, CF(1) - the catalytic core - and CF(0) - the membrane proton channel. CF(1) has five subunits: alpha(3), beta(3), gamma(1), delta(1), epsilon(1). CF(0) has three main subunits: a(1), b(2) and c(9-12). The alpha and beta chains form an alternating ring which encloses part of the gamma chain. CF(1) is attached to CF(0) by a central stalk formed by the gamma and epsilon chains, while a peripheral stalk is formed by the delta and b chains.

The protein localises to the cell inner membrane. It carries out the reaction ATP + H2O + 4 H(+)(in) = ADP + phosphate + 5 H(+)(out). Produces ATP from ADP in the presence of a proton gradient across the membrane. The catalytic sites are hosted primarily by the beta subunits. The sequence is that of ATP synthase subunit beta from Helicobacter pylori (strain HPAG1).